Consider the following 340-residue polypeptide: Ephrin-B3 (340 aa).

A signal peptide spans 1–27 (MGAPHFGPGGVQVGALLLLGFAGLVSG). Residues 28 to 167 (LSLEPVYWNS…TRGMKVLLRV (140 aa)) form the Ephrin RBD domain. Over 28–227 (LSLEPVYWNS…GPLPPPSMPA (200 aa)) the chain is Extracellular. Cystine bridges form between Cys-62-Cys-104 and Cys-92-Cys-156. A disordered region spans residues 168 to 227 (GQSPRGGAVPRKPVSEMPMERDRGAAHSAEPGRDTIPGDPSSNATSRGAEGPLPPPSMPA). Basic and acidic residues predominate over residues 185–200 (PMERDRGAAHSAEPGR). A glycan (N-linked (GlcNAc...) asparagine) is linked at Asn-210. A helical transmembrane segment spans residues 228-248 (VAGAAGGMALLLLGVAGAGGA). The Cytoplasmic portion of the chain corresponds to 249 to 340 (MCWRRRRAKP…QSPPNIYYKV (92 aa)). Positions 254 to 300 (RRAKPSESRHPGPGSFGRGGSLGLGGGGGMGPREAEPGELGIALRGG) are disordered. The segment covering 267–284 (GSFGRGGSLGLGGGGGMG) has biased composition (gly residues). Residue Arg-271 is modified to Omega-N-methylarginine. A Phosphoserine modification is found at Ser-274. A PDZ-binding motif is present at residues 338-340 (YKV).

Belongs to the ephrin family. Interacts with GRIP1 and GRIP2. In terms of tissue distribution, expressed on lateral floor plate cells, specifically on commissural axon segments that have passed through the floor plate. Expressed in cells of the retinal ganglion cell layer during retinal axon guidance to the optic disk. Expressed in myogenic progenitor cells.

The protein localises to the membrane. Functionally, cell surface transmembrane ligand for Eph receptors, a family of receptor tyrosine kinases which are crucial for migration, repulsion and adhesion during neuronal, vascular and epithelial development. Binds promiscuously Eph receptors residing on adjacent cells, leading to contact-dependent bidirectional signaling into neighboring cells. The signaling pathway downstream of the receptor is referred to as forward signaling while the signaling pathway downstream of the ephrin ligand is referred to as reverse signaling. May play a pivotal role in forebrain function. Binds to, and induce the collapse of, commissural axons/growth cones in vitro. May play a role in constraining the orientation of longitudinally projecting axons. In Mus musculus (Mouse), this protein is Ephrin-B3 (Efnb3).